Reading from the N-terminus, the 141-residue chain is Putative RING-H2 finger protein ATL62 (141 aa).

A helical transmembrane segment spans residues 14-32 (FFAILTVFYSIFRCCLAYC). Residues 79–121 (CVVCLSKFIDEDKARVLPSCNHCFHFDFTDTWLHSDYTCPNCR) form an RING-type; degenerate zinc finger.

The protein belongs to the RING-type zinc finger family. ATL subfamily.

It is found in the membrane. The enzyme catalyses S-ubiquitinyl-[E2 ubiquitin-conjugating enzyme]-L-cysteine + [acceptor protein]-L-lysine = [E2 ubiquitin-conjugating enzyme]-L-cysteine + N(6)-ubiquitinyl-[acceptor protein]-L-lysine.. The protein operates within protein modification; protein ubiquitination. The polypeptide is Putative RING-H2 finger protein ATL62 (ATL62) (Arabidopsis thaliana (Mouse-ear cress)).